The sequence spans 179 residues: ATP synthase subunit b, chloroplastic (179 aa).

Residues 28–46 (IINIAALVGILIYAGRDFL) form a helical membrane-spanning segment.

It belongs to the ATPase B chain family. F-type ATPases have 2 components, F(1) - the catalytic core - and F(0) - the membrane proton channel. F(1) has five subunits: alpha(3), beta(3), gamma(1), delta(1), epsilon(1). F(0) has four main subunits: a(1), b(1), b'(1) and c(10-14). The alpha and beta chains form an alternating ring which encloses part of the gamma chain. F(1) is attached to F(0) by a central stalk formed by the gamma and epsilon chains, while a peripheral stalk is formed by the delta, b and b' chains.

The protein resides in the plastid. The protein localises to the chloroplast thylakoid membrane. In terms of biological role, f(1)F(0) ATP synthase produces ATP from ADP in the presence of a proton or sodium gradient. F-type ATPases consist of two structural domains, F(1) containing the extramembraneous catalytic core and F(0) containing the membrane proton channel, linked together by a central stalk and a peripheral stalk. During catalysis, ATP synthesis in the catalytic domain of F(1) is coupled via a rotary mechanism of the central stalk subunits to proton translocation. Functionally, component of the F(0) channel, it forms part of the peripheral stalk, linking F(1) to F(0). This Trieres chinensis (Marine centric diatom) protein is ATP synthase subunit b, chloroplastic.